A 504-amino-acid chain; its full sequence is Maturase K (504 aa).

Belongs to the intron maturase 2 family. MatK subfamily.

The protein localises to the plastid. It localises to the chloroplast. Usually encoded in the trnK tRNA gene intron. Probably assists in splicing its own and other chloroplast group II introns. The chain is Maturase K from Quercus robur (English oak).